A 129-amino-acid polypeptide reads, in one-letter code: Small ribosomal subunit protein uS11 (129 aa).

The protein belongs to the universal ribosomal protein uS11 family. As to quaternary structure, part of the 30S ribosomal subunit. Interacts with proteins S7 and S18. Binds to IF-3.

Functionally, located on the platform of the 30S subunit, it bridges several disparate RNA helices of the 16S rRNA. Forms part of the Shine-Dalgarno cleft in the 70S ribosome. This Limosilactobacillus fermentum (strain NBRC 3956 / LMG 18251) (Lactobacillus fermentum) protein is Small ribosomal subunit protein uS11.